Consider the following 426-residue polypeptide: Glutamate-1-semialdehyde 2,1-aminomutase (426 aa).

Lysine 268 is subject to N6-(pyridoxal phosphate)lysine.

Belongs to the class-III pyridoxal-phosphate-dependent aminotransferase family. HemL subfamily. Requires pyridoxal 5'-phosphate as cofactor.

Its subcellular location is the cytoplasm. The enzyme catalyses (S)-4-amino-5-oxopentanoate = 5-aminolevulinate. The protein operates within porphyrin-containing compound metabolism; protoporphyrin-IX biosynthesis; 5-aminolevulinate from L-glutamyl-tRNA(Glu): step 2/2. This is Glutamate-1-semialdehyde 2,1-aminomutase from Saccharolobus islandicus (strain Y.N.15.51 / Yellowstone #2) (Sulfolobus islandicus).